The primary structure comprises 303 residues: GPN-loop GTPase 2 (303 aa).

Position 29–34 (29–34 (GSGKST)) interacts with GTP. Residues 85–87 (GPN) carry the Gly-Pro-Asn (GPN)-loop; involved in dimer interface motif. GTP is bound at residue 187–190 (SKMD).

It belongs to the GPN-loop GTPase family. In terms of assembly, heterodimers with gpn1 or gpn3. Binds to RNA polymerase II (RNAPII).

Small GTPase required for proper localization of RNA polymerase II and III (RNAPII and RNAPIII). May act at an RNAP assembly step prior to nuclear import. The sequence is that of GPN-loop GTPase 2 from Xenopus tropicalis (Western clawed frog).